Consider the following 160-residue polypeptide: MSDDDHHFESSADAGASKTYPQQAGTIRKSGHIVIKNRPCKVVEVSTSKTGKHGHAKCHFVAIDIFNGKKLEDIVPSSHNCDVPHVNRVDYQLLDITEDGFVSLLTDSGDTKDDLKLPADEALVKQMKEGFEAGKDLILSVMCAMGEEQICAVKDVSGGK.

Positions 1-10 (MSDDDHHFES) are enriched in basic and acidic residues. A disordered region spans residues 1 to 23 (MSDDDHHFESSADAGASKTYPQQ). Lys-52 bears the Hypusine mark.

This sequence belongs to the eIF-5A family. Post-translationally, lys-52 undergoes hypusination, a unique post-translational modification that consists in the addition of a butylamino group from spermidine to lysine side chain, leading to the formation of the unusual amino acid hypusine. eIF-5As are the only known proteins to undergo this modification, which is essential for their function.

Translation factor that promotes translation elongation and termination, particularly upon ribosome stalling at specific amino acid sequence contexts. Binds between the exit (E) and peptidyl (P) site of the ribosome and promotes rescue of stalled ribosome: specifically required for efficient translation of polyproline-containing peptides as well as other motifs that stall the ribosome. Acts as a ribosome quality control (RQC) cofactor by joining the RQC complex to facilitate peptidyl transfer during CAT tailing step. The protein is Eukaryotic translation initiation factor 5A of Dianthus caryophyllus (Carnation).